The sequence spans 685 residues: E3 ubiquitin ligase Rnf157 (685 aa).

G2 carries N-myristoyl glycine lipidation. The RING-type zinc-finger motif lies at 276-315 (ECVVCLSDVRDTLILPCRHLCLCNTCADTLRYQANNCPIC). A D-box 1 motif is present at residues 329-332 (RKKL). Disordered stretches follow at residues 339-361 (SFNPIISSQTSDSEEHSSSENIP), 433-584 (LSKS…AGEQ), and 650-672 (LGGRRPSARPRSPRGGLGKEASA). The span at 434–443 (SKSISQNSSV) shows a compositional bias: low complexity. Positions 478 to 537 (ESENLTLSSSGAVDQSSCTGTPLSSTISSPEDPASSSLAQSVMSMASSQISTDTVSSMSG) are enriched in polar residues. Residues 552 to 561 (PSPRAASRAP) are compositionally biased toward low complexity. Positions 657-660 (ARPR) match the D-box 2 motif.

Interacts with APBB1. Interacts with CHD1; CHD1-binding controls RNF157 stability. Also interacts with ATRN, MEGF8, TECR, MSI2, PLRG1, BYSL, MTERF3, PSMA1, MRPS18B, PRPF4, FASTKD2, SLC25A1, SMU1, CNOT9, MRPS2, MAGT1, FXR2, EMD, PSMD8, HDAC1, RAN, HSD17B12, TXNDC5 and MRPL19.

It is found in the cytoplasm. The enzyme catalyses S-ubiquitinyl-[E2 ubiquitin-conjugating enzyme]-L-cysteine + [acceptor protein]-L-lysine = [E2 ubiquitin-conjugating enzyme]-L-cysteine + N(6)-ubiquitinyl-[acceptor protein]-L-lysine.. Functionally, E3 ubiquitin ligase that ubiquitinates APBB1 for its degradation by the proteasome and thus prevents apoptosis and promotes survival of neurons. Has a dual role in neurons as it is also required for dendrite growth and maintenance for which its ligase activity is not critical. May act as a scaffold molecule to regulate this process. Acts as a downstream effector of the interconnected PI3K and MAPK signaling pathways and thus participates in the regulation of the cell cycle. In Mus musculus (Mouse), this protein is E3 ubiquitin ligase Rnf157 (Rnf157).